The sequence spans 89 residues: MDFSQFNGAEQAHMSKVIEKKQMQDFMRLYSGLVEKCFNACAQDFTSKALTTNETTCVQNCTDKFLKHSERVGARFAEHNAEQMQGAGQ.

Positions 37 to 61 match the Twin CX3C motif motif; that stretch reads CFNACAQDFTSKALTTNETTCVQNC. Intrachain disulfides connect cysteine 37-cysteine 61 and cysteine 41-cysteine 57.

Belongs to the small Tim family. Heterohexamer; composed of 3 copies of TIM9 and 3 copies of TIM10, named soluble 70 kDa complex. Associates with the TIM22 complex, whose core is composed of TIM22 and TIM54. Interacts with the transmembrane regions of multi-pass transmembrane proteins in transit.

The protein resides in the mitochondrion inner membrane. Functionally, mitochondrial intermembrane chaperone that participates in the import and insertion of multi-pass transmembrane proteins into the mitochondrial inner membrane. Also required for the transfer of beta-barrel precursors from the TOM complex to the sorting and assembly machinery (SAM complex) of the outer membrane. Acts as a chaperone-like protein that protects the hydrophobic precursors from aggregation and guide them through the mitochondrial intermembrane space. This Cryptococcus neoformans var. neoformans serotype D (strain B-3501A) (Filobasidiella neoformans) protein is Mitochondrial import inner membrane translocase subunit TIM9 (TIM9).